A 115-amino-acid polypeptide reads, in one-letter code: Large ribosomal subunit protein bL19 (115 aa).

This sequence belongs to the bacterial ribosomal protein bL19 family.

Functionally, this protein is located at the 30S-50S ribosomal subunit interface and may play a role in the structure and function of the aminoacyl-tRNA binding site. This Salmonella choleraesuis (strain SC-B67) protein is Large ribosomal subunit protein bL19.